We begin with the raw amino-acid sequence, 401 residues long: MGILGIIVEYNPFHNGHLYHLQTSKELTKCDYTIAVMSGNFVQRGEPAIVDKWKRTQMALKAGIDLVIELPVVYATSTAENFAYGAVKLLDSLKIVDCISFGSEKGDLNELTKIAEILLEEPIYYRKALKEYLKSGITFAKARELALQKVINNNEIEKILQTSNNILAIEYLKSLKKIGSSITPFTIKRKGSLYTSLELKGEFASASSIRKHIFEKGLEGLEKYIPDFTKEILQSSFEKKQGPVSLEEFSNILIYLLRNHIPLNHIFDVSEGLENKIYKASYKTNNVEELMKLVKSKRYTESRIRHILIHLLLNIDKQIFKEFDGPNYIRVLGFNEKGKEMLREIKKKSPLPIITKVSQYKEKLSNTKMFEKDLFATDIYTLAYKNSSIAGLDFIHPLIKL.

Residues 7-20, Gly102, Asn164, and Arg189 contribute to the ATP site; that span reads IVEY…HLYH.

It belongs to the TmcAL family.

The protein localises to the cytoplasm. The catalysed reaction is cytidine(34) in elongator tRNA(Met) + acetate + ATP = N(4)-acetylcytidine(34) in elongator tRNA(Met) + AMP + diphosphate. Its function is as follows. Catalyzes the formation of N(4)-acetylcytidine (ac(4)C) at the wobble position of elongator tRNA(Met), using acetate and ATP as substrates. First activates an acetate ion to form acetyladenylate (Ac-AMP) and then transfers the acetyl group to tRNA to form ac(4)C34. This chain is tRNA(Met) cytidine acetate ligase, found in Thermoanaerobacter sp. (strain X514).